Consider the following 1168-residue polypeptide: MEKEELNKLNHLSLVSNVCNELETHLGSAEKVLAEFIIDLGRHSETVDEFDKNLKEAGAEMPDYFVRSLLTTIHGIYPPKPKSEKKKEEGDDQKFKGLAIKDTKDKVKELEKEIEREAEERRREEDRNRDRDRRESGRDRDRDRNRDRDDRRDRHRDRERNRGDEEGEDRRSDRRHRERGRGDGGEGEDRRRDRRAKDEYVEEDKGGANEPELYQVYKGRVTRVMDAGCFVQFDKFRGKEGLVHVSQMATRRVDKAKEFVKRDMEVYVKVISISSDKYSLSMRDVDQNTGRDLIPLRKPSDEDDSSRSNPSYRTKDGQVTKTGISGIRIVEENDVAPSRRPLKKMSSPERWEAKQLIASGVLRVDEFPMYDEDGDGMLYQEEGAEEELEIEMNEDEPAFLQGQTRYSVDMSPVKIFKNPEGSLSRAAALQSALTKERREMREQQQRTMLDSIPKDLNRPWEDPMPETGERHLAQELRGVGLSAYDMPEWKKDAFGKTPTFGQRSKLSIQEQRESLPIYKLKKELIQAVHDNQVLVVIGETGSGKTTQVTQYLAEAGYTTKGKIGCTQPRRVAAMSVAKRVAEEFGCRLGEEVGYAIRFEDCTGPDTVIKYMTDGMLLREILIDENLSQYSVIMLDEAHERTIHTDVLFGLLKKLMKRRLDLRLIVTSATLDAEKFSGYFFNCNIFTIPGRTFPVEILYTKQPETDYLDAALITVLQIHLTEPEGDILVFLTGQEEIDSACQSLYERMKGLGKNVPELIILPVYSALPSEMQSRIFDPPPPGKRKVVVATNIAEASLTIDGIYYVVDPGFAKQNVYNPKQGLESLVITPISQASAKQRAGRAGRTGPGKCYRLYTESAYRNEMPPTSIPEIQRINLGMTTLTMKAMGINDLLSFDFMDPPQPQALISAMEQLYSLGALDEEGLLTKLGRKMAEFPLEPPLSKMLLASVDLGCSDEILTMIAMIQTGNIFYRPREKQAQADQKRAKFFQPEGDHLTLLAVYEAWKAKNFSGPWCFENFIQSRSLRRAQDVRKQLLSIMDKYKLDVVTAGKNFTKIRKAITAGFFFHGARKDPQEGYRTLVENQPVYIHPSSALFQRQPDWVIYHDLVMTTKEYMREVTVIDPKWLVELAPRFFKVSDPTKMSKRKRQERIEPLYDRYHEPNSWRLSKRRA.

The interval 76–206 (IYPPKPKSEK…KDEYVEEDKG (131 aa)) is disordered. 2 stretches are compositionally biased toward basic and acidic residues: residues 81 to 172 (PKSE…DRRS) and 180 to 206 (GRGD…EDKG). Positions 214 to 283 (YQVYKGRVTR…SSDKYSLSMR (70 aa)) constitute an S1 motif domain. A disordered region spans residues 289 to 326 (TGRDLIPLRKPSDEDDSSRSNPSYRTKDGQVTKTGISG). Ser411 bears the Phosphoserine mark. Positions 525–688 (IQAVHDNQVL…FFNCNIFTIP (164 aa)) constitute a Helicase ATP-binding domain. An ATP-binding site is contributed by 538-545 (GETGSGKT). The DEAH box motif lies at 635 to 638 (DEAH). Residues 706-886 (YLDAALITVL…MTTLTMKAMG (181 aa)) form the Helicase C-terminal domain.

This sequence belongs to the DEAD box helicase family. DEAH subfamily. PRP22 sub-subfamily.

It is found in the nucleus. It catalyses the reaction ATP + H2O = ADP + phosphate + H(+). In terms of biological role, may be involved in pre-mRNA splicing. This chain is Probable pre-mRNA-splicing factor ATP-dependent RNA helicase DEAH5, found in Arabidopsis thaliana (Mouse-ear cress).